Here is a 272-residue protein sequence, read N- to C-terminus: Tryptophan synthase alpha chain (272 aa).

Active-site proton acceptor residues include Glu-49 and Glu-60.

The protein belongs to the TrpA family. As to quaternary structure, tetramer of two alpha and two beta chains.

The enzyme catalyses (1S,2R)-1-C-(indol-3-yl)glycerol 3-phosphate + L-serine = D-glyceraldehyde 3-phosphate + L-tryptophan + H2O. The protein operates within amino-acid biosynthesis; L-tryptophan biosynthesis; L-tryptophan from chorismate: step 5/5. Its function is as follows. The alpha subunit is responsible for the aldol cleavage of indoleglycerol phosphate to indole and glyceraldehyde 3-phosphate. The protein is Tryptophan synthase alpha chain of Legionella pneumophila (strain Lens).